We begin with the raw amino-acid sequence, 412 residues long: Probable tRNA pseudouridine synthase D (412 aa).

Asp97 functions as the Nucleophile in the catalytic mechanism. The region spanning 167 to 370 (ALPNYYGYQR…YGSYRRARLQ (204 aa)) is the TRUD domain.

The protein belongs to the pseudouridine synthase TruD family.

It catalyses the reaction uridine(13) in tRNA = pseudouridine(13) in tRNA. Its function is as follows. Could be responsible for synthesis of pseudouridine from uracil-13 in transfer RNAs. This Pyrobaculum neutrophilum (strain DSM 2338 / JCM 9278 / NBRC 100436 / V24Sta) (Thermoproteus neutrophilus) protein is Probable tRNA pseudouridine synthase D.